The following is a 116-amino-acid chain: Prefoldin subunit beta (116 aa).

This sequence belongs to the prefoldin subunit beta family. Heterohexamer of two alpha and four beta subunits.

Its subcellular location is the cytoplasm. Functionally, molecular chaperone capable of stabilizing a range of proteins. Seems to fulfill an ATP-independent, HSP70-like function in archaeal de novo protein folding. The chain is Prefoldin subunit beta from Methanobrevibacter smithii (strain ATCC 35061 / DSM 861 / OCM 144 / PS).